We begin with the raw amino-acid sequence, 280 residues long: MRKNVVRYLRCPHCAAPLRSSDRTLRCENGHTFDVARQGYVNLLRRPTKLAADTTDMVAARAALLDSGHYAPLTERLAGTARRAAGAGAPDCVVDIGGGTGHHLARVLEEFEDAEGLLLDMSKPAVRRAARAHPRASSAVADVWDTLPLRDGAAAMALNVFAPRNPPEIRRILRPGGTLLVVTPQQDHLAELVDALGLLRVRDHKEGRLAEQLAPHFEAVGQERLRTTLRLDHDALGRVVAMGPSSWHQDPDELARRIAELPGIHEVTLSVTFTVCRPLP.

Residues Cys11, Cys14, Cys27, and His31 each contribute to the Zn(2+) site. Residues Tyr70, 100–101 (TG), and His188 each bind S-adenosyl-L-methionine.

Belongs to the methyltransferase superfamily. RlmA family.

The enzyme catalyses guanosine(748) in 23S rRNA + S-adenosyl-L-methionine = N(1)-methylguanosine(748) in 23S rRNA + S-adenosyl-L-homocysteine + H(+). Specifically methylates the guanosine in position 748 of 23S rRNA. Confers resistance to the macrolide antibiotic tylosine. This is 23S rRNA (guanine(748)-N(1))-methyltransferase (rlmAII) from Streptomyces fradiae (Streptomyces roseoflavus).